We begin with the raw amino-acid sequence, 265 residues long: Glutamate racemase (265 aa).

Residues 12-13 (DS) and 44-45 (YG) each bind substrate. Cys75 functions as the Proton donor/acceptor in the catalytic mechanism. Residue 76 to 77 (NT) coordinates substrate. The active-site Proton donor/acceptor is the Cys186. 187–188 (TH) serves as a coordination point for substrate.

This sequence belongs to the aspartate/glutamate racemases family.

It catalyses the reaction L-glutamate = D-glutamate. It functions in the pathway cell wall biogenesis; peptidoglycan biosynthesis. In terms of biological role, provides the (R)-glutamate required for cell wall biosynthesis. In Pseudomonas putida (strain ATCC 47054 / DSM 6125 / CFBP 8728 / NCIMB 11950 / KT2440), this protein is Glutamate racemase.